A 137-amino-acid polypeptide reads, in one-letter code: ATP synthase epsilon chain (137 aa).

Belongs to the ATPase epsilon chain family. As to quaternary structure, F-type ATPases have 2 components, CF(1) - the catalytic core - and CF(0) - the membrane proton channel. CF(1) has five subunits: alpha(3), beta(3), gamma(1), delta(1), epsilon(1). CF(0) has three main subunits: a, b and c.

The protein resides in the cellular thylakoid membrane. Its function is as follows. Produces ATP from ADP in the presence of a proton gradient across the membrane. The chain is ATP synthase epsilon chain from Synechococcus sp. (strain JA-2-3B'a(2-13)) (Cyanobacteria bacterium Yellowstone B-Prime).